A 525-amino-acid polypeptide reads, in one-letter code: GMP synthase [glutamine-hydrolyzing] (525 aa).

The region spanning 9–207 (RILILDFGSQ…ILDICGCEAL (199 aa)) is the Glutamine amidotransferase type-1 domain. The active-site Nucleophile is the cysteine 86. Residues histidine 181 and glutamate 183 contribute to the active site. Residues 208-400 (WTPSKIAEDA…LGLPYDMVYR (193 aa)) form the GMPS ATP-PPase domain. 235–241 (SGGVDSS) contributes to the ATP binding site.

Homodimer.

It carries out the reaction XMP + L-glutamine + ATP + H2O = GMP + L-glutamate + AMP + diphosphate + 2 H(+). It functions in the pathway purine metabolism; GMP biosynthesis; GMP from XMP (L-Gln route): step 1/1. Its function is as follows. Catalyzes the synthesis of GMP from XMP. The chain is GMP synthase [glutamine-hydrolyzing] from Pseudomonas savastanoi pv. phaseolicola (strain 1448A / Race 6) (Pseudomonas syringae pv. phaseolicola (strain 1448A / Race 6)).